A 703-amino-acid chain; its full sequence is Solute carrier family 28 member 3 (703 aa).

Basic and acidic residues predominate over residues 1–19; that stretch reads MSRADPGKNSEPSESKMSL. The disordered stretch occupies residues 1–93; it reads MSRADPGKNS…DPEDDSEDEH (93 aa). Topologically, residues 1-117 are cytoplasmic; that stretch reads MSRADPGKNS…FCRKHRVVLR (117 aa). The segment covering 44-61 has biased composition (polar residues); the sequence is QNTPGNSTVRNRVVQSGE. Residues 63 to 72 show a composition bias toward basic and acidic residues; that stretch reads GHAKQDDRQI. The chain crosses the membrane as a helical span at residues 118–138; that stretch reads STIWAVLLTGFLALVIAACAI. The Extracellular portion of the chain corresponds to 139–143; sequence NFHRA. Residues 144-164 form a helical membrane-spanning segment; that stretch reads LPLFVITLVTIFFVIWDHLMA. The Cytoplasmic segment spans residues 165–188; the sequence is KYEQRIDDFLSPGRRLLDRHWFWL. A helical transmembrane segment spans residues 189–209; it reads KWVVWSSLILAIILWLSLDTA. Over 210–212 the chain is Extracellular; the sequence is KLG. A helical membrane pass occupies residues 213–234; it reads QQNLVSFGGLIMYLILLFLFSK. At 235 to 242 the chain is on the cytoplasmic side; sequence HPTRVYWR. The helical transmembrane segment at 243 to 262 threads the bilayer; that stretch reads PVFWGIGLQFLLGLLILRTR. Over 263-299 the chain is Extracellular; it reads PGFVAFDWMGRQVQTFLGYTDTGARFVFGEKYTDHFF. The helical transmembrane segment at 300–320 threads the bilayer; that stretch reads AFKILPIVVFFSTVMSMLYYL. Topologically, residues 321–344 are cytoplasmic; sequence GLMQWIIRKVGWLMLVTMGSSPIE. Positions 345-363 form an intramembrane region, helical; the sequence is SVVAAGNIFIGQTESPLLV. The Cytoplasmic portion of the chain corresponds to 364–376; sequence QPYLPHVTKSELH. The chain crosses the membrane as a helical span at residues 377 to 399; it reads TIMTAGFATIAGSVLGAYISFGV. Residues 400–401 lie on the Extracellular side of the membrane; that stretch reads SS. Residues 402–423 form a helical membrane-spanning segment; the sequence is THLLTASVMSAPAALAVAKLFW. Residues 424–458 are Cytoplasmic-facing; the sequence is PETEKPKITLKSAMKMENGDSRNLLEAASQGASSS. A helical membrane pass occupies residues 459-484; that stretch reads IPLVANIAANLIAFLALLSFVNSALS. The Extracellular segment spans residues 485-522; sequence WFGSMFNYPELSFELICSYIFMPFSFMMGVDWQDSFMV. An intramembrane region (helical) is located at residues 523-542; that stretch reads AKLIGYKTFFNEFVAYDHLS. The Extracellular segment spans residues 543–581; sequence KLINLRKAAGPKFVNGVQQYMSIRSETIATYALCGFANF. Residues 582 to 592 form a helical membrane-spanning segment; the sequence is GSLGIVIGGLT. Residues 593–605 lie on the Cytoplasmic side of the membrane; sequence SIAPSRKRDIASG. Residues 606 to 628 traverse the membrane as a helical segment; sequence AMRALIAGTIACFMTACIAGILS. The Extracellular portion of the chain corresponds to 629-703; it reads DTPVDINCHH…LNCNWIPNKL (75 aa).

The protein belongs to the concentrative nucleoside transporter (CNT) (TC 2.A.41) family. Homotrimer.

It localises to the cell membrane. The catalysed reaction is thymidine(out) + 2 Na(+)(out) = thymidine(in) + 2 Na(+)(in). It catalyses the reaction cytidine(out) + 2 Na(+)(out) = cytidine(in) + 2 Na(+)(in). The enzyme catalyses uridine(out) + 2 Na(+)(out) = uridine(in) + 2 Na(+)(in). It carries out the reaction adenosine(out) + 2 Na(+)(out) = adenosine(in) + 2 Na(+)(in). The catalysed reaction is guanosine(out) + 2 Na(+)(out) = guanosine(in) + 2 Na(+)(in). It catalyses the reaction inosine(out) + 2 Na(+)(out) = inosine(in) + 2 Na(+)(in). Its function is as follows. Sodium-dependent, pyrimidine- and purine-selective. Involved in the homeostasis of endogenous nucleosides. Exhibits the transport characteristics of the nucleoside transport system cib or N3 subtype (N3/cib) (with marked transport of both thymidine and inosine). Employs a 2:1 sodium/nucleoside ratio. Also able to transport gemcitabine, 3'-azido-3'-deoxythymidine (AZT), ribavirin and 3-deazauridine. This Mus musculus (Mouse) protein is Solute carrier family 28 member 3 (Slc28a3).